We begin with the raw amino-acid sequence, 509 residues long: tRNA-2-methylthio-N(6)-dimethylallyladenosine synthase (509 aa).

Residues 1 to 15 (MNEQQRLASQQVNSS) show a composition bias toward polar residues. Residues 1 to 26 (MNEQQRLASQQVNSSTKKEEKDYSKY) are disordered. A compositionally biased stretch (basic and acidic residues) spans 16 to 25 (TKKEEKDYSK). The region spanning 66–184 (RKFYIRTYGC…LPYILKDAMF (119 aa)) is the MTTase N-terminal domain. Cys-75, Cys-111, Cys-145, Cys-221, Cys-225, and Cys-228 together coordinate [4Fe-4S] cluster. The region spanning 207–437 (RRGDIKAWVN…NALVNKLAIE (231 aa)) is the Radical SAM core domain. Residues 440 to 503 (DRYKGQIVEV…TWSLNGELVE (64 aa)) form the TRAM domain.

It belongs to the methylthiotransferase family. MiaB subfamily. As to quaternary structure, monomer. Requires [4Fe-4S] cluster as cofactor.

Its subcellular location is the cytoplasm. It catalyses the reaction N(6)-dimethylallyladenosine(37) in tRNA + (sulfur carrier)-SH + AH2 + 2 S-adenosyl-L-methionine = 2-methylsulfanyl-N(6)-dimethylallyladenosine(37) in tRNA + (sulfur carrier)-H + 5'-deoxyadenosine + L-methionine + A + S-adenosyl-L-homocysteine + 2 H(+). In terms of biological role, catalyzes the methylthiolation of N6-(dimethylallyl)adenosine (i(6)A), leading to the formation of 2-methylthio-N6-(dimethylallyl)adenosine (ms(2)i(6)A) at position 37 in tRNAs that read codons beginning with uridine. In Bacillus thuringiensis (strain Al Hakam), this protein is tRNA-2-methylthio-N(6)-dimethylallyladenosine synthase.